A 216-amino-acid chain; its full sequence is MSKQLILALSKGRILQETLPLLADAGIEPAEDFGKSRKLLFDTNLPDVKLVVIRAVDVPTYVQMGAADVGVAGKDTLLEHGAEGLYEPLDLEISRCKLMTAGIVGAEPTHARRRVATKFVNVARRYYAQQGIQAEVIKLYGAMELAPLMNLADEIVDIVDTGNTLRANGMEPRELIDEVSSRLVVNKASMTMKHDRLKPLIERLGQAVASRRETQA.

Belongs to the ATP phosphoribosyltransferase family. Short subfamily. In terms of assembly, heteromultimer composed of HisG and HisZ subunits.

It is found in the cytoplasm. The catalysed reaction is 1-(5-phospho-beta-D-ribosyl)-ATP + diphosphate = 5-phospho-alpha-D-ribose 1-diphosphate + ATP. It functions in the pathway amino-acid biosynthesis; L-histidine biosynthesis; L-histidine from 5-phospho-alpha-D-ribose 1-diphosphate: step 1/9. Catalyzes the condensation of ATP and 5-phosphoribose 1-diphosphate to form N'-(5'-phosphoribosyl)-ATP (PR-ATP). Has a crucial role in the pathway because the rate of histidine biosynthesis seems to be controlled primarily by regulation of HisG enzymatic activity. The polypeptide is ATP phosphoribosyltransferase (Chromohalobacter salexigens (strain ATCC BAA-138 / DSM 3043 / CIP 106854 / NCIMB 13768 / 1H11)).